The following is a 502-amino-acid chain: Thermosome subunit beta (502 aa).

The protein belongs to the TCP-1 chaperonin family. As to quaternary structure, forms a Heterooligomeric complex of two stacked eight-membered rings.

In terms of biological role, molecular chaperone; binds unfolded polypeptides in vitro, and has a weak ATPase activity. The protein is Thermosome subunit beta (thsB) of Desulfurococcus mucosus (Desulfurococcus mobilis).